The sequence spans 213 residues: uncharacterized protein (213 aa).

Coiled coils occupy residues 54–78 (KEQTKLNNLIEKGKQMLKEYNNLKL) and 108–151 (VKDV…STSK). Over residues 122 to 142 (IEKEKEEEKAAKKAEKAEEKK) the composition is skewed to basic and acidic residues. Positions 122 to 213 (IEKEKEEEKA…FGGKPTGQIW (92 aa)) are disordered. A compositionally biased stretch (low complexity) spans 146 to 188 (KNSTSKSGSKSSKSSSGSSKSSSKSSKSSKSSSGSSKSSSKSS). A compositionally biased stretch (basic residues) spans 189–199 (KNSKKSSKKSN).

This sequence belongs to the mimivirus R546 family.

This is an uncharacterized protein from Acanthamoeba polyphaga (Amoeba).